We begin with the raw amino-acid sequence, 284 residues long: tRNA pseudouridine synthase A (284 aa).

The active-site Nucleophile is the D62. Y120 provides a ligand contact to substrate.

It belongs to the tRNA pseudouridine synthase TruA family. Homodimer.

It catalyses the reaction uridine(38/39/40) in tRNA = pseudouridine(38/39/40) in tRNA. Functionally, formation of pseudouridine at positions 38, 39 and 40 in the anticodon stem and loop of transfer RNAs. This Thermosynechococcus vestitus (strain NIES-2133 / IAM M-273 / BP-1) protein is tRNA pseudouridine synthase A.